A 349-amino-acid chain; its full sequence is Flavonol synthase/flavanone 3-hydroxylase (349 aa).

The Fe2OG dioxygenase domain maps to 213–310; it reads DIVYMLKINY…RMSWPVFLEP (98 aa). Residues His-238, Asp-240, and His-291 each contribute to the Fe cation site.

Belongs to the iron/ascorbate-dependent oxidoreductase family. The cofactor is Fe cation. L-ascorbate is required as a cofactor.

Its subcellular location is the cytoplasm. The enzyme catalyses a (2R,3R)-dihydroflavonol + 2-oxoglutarate + O2 = a flavonol + succinate + CO2 + H2O. It carries out the reaction a (2S)-flavan-4-one + 2-oxoglutarate + O2 = a (2R,3R)-dihydroflavonol + succinate + CO2. The protein operates within secondary metabolite biosynthesis; flavonoid biosynthesis. Functionally, catalyzes the formation of flavonols from dihydroflavonols. It can act on dihydrokaempferol to produce kaempferol, on dihydroquercetin to produce quercitin and on dihydromyricetin to produce myricetin. This is Flavonol synthase/flavanone 3-hydroxylase from Solanum tuberosum (Potato).